The chain runs to 364 residues: Alanine racemase (364 aa).

Lys35 serves as the catalytic Proton acceptor; specific for D-alanine. Residue Lys35 is modified to N6-(pyridoxal phosphate)lysine. Arg130 provides a ligand contact to substrate. The active-site Proton acceptor; specific for L-alanine is Tyr256. Residue Met304 coordinates substrate.

Belongs to the alanine racemase family. It depends on pyridoxal 5'-phosphate as a cofactor.

The enzyme catalyses L-alanine = D-alanine. The protein operates within amino-acid biosynthesis; D-alanine biosynthesis; D-alanine from L-alanine: step 1/1. Catalyzes the interconversion of L-alanine and D-alanine. May also act on other amino acids. The chain is Alanine racemase (alr) from Polaromonas sp. (strain JS666 / ATCC BAA-500).